We begin with the raw amino-acid sequence, 375 residues long: Growth/differentiation factor 8 (375 aa).

Residues 1–23 (MQKLQLCVYIYLFMLIVAGPVDL) form the signal peptide. Residues 24 to 266 (NENSEQKENV…VTDTPKRSRR (243 aa)) constitute a propeptide that is removed on maturation. Residue Asn71 is glycosylated (N-linked (GlcNAc...) asparagine). Cystine bridges form between Cys272-Cys282, Cys281-Cys340, Cys309-Cys372, and Cys313-Cys374.

This sequence belongs to the TGF-beta family. As to quaternary structure, homodimer; disulfide-linked. Interacts with WFIKKN2, leading to inhibit its activity. Interacts with FSTL3. In terms of processing, synthesized as large precursor molecule that undergoes proteolytic cleavage to generate an N-terminal propeptide and a disulfide linked C-terminal dimer, which is the biologically active molecule. The circulating form consists of a latent complex of the C-terminal dimer and other proteins, including its propeptide, which maintain the C-terminal dimer in a latent, inactive state. Ligand activation requires additional cleavage of the prodomain by a tolloid-like metalloproteinase.

It localises to the secreted. Its function is as follows. Acts specifically as a negative regulator of skeletal muscle growth. The sequence is that of Growth/differentiation factor 8 (MSTN) from Pan paniscus (Pygmy chimpanzee).